The following is a 120-amino-acid chain: Methylglyoxal synthase (120 aa).

One can recognise an MGS-like domain in the interval 1-120 (MRIALIAHDN…TAEILVESVL (120 aa)). Substrate-binding positions include His-8, Lys-12, and 54 to 55 (SG). Catalysis depends on Asp-60, which acts as the Proton donor/acceptor. His-87 is a binding site for substrate.

The protein belongs to the methylglyoxal synthase family.

It catalyses the reaction dihydroxyacetone phosphate = methylglyoxal + phosphate. Catalyzes the formation of methylglyoxal from dihydroxyacetone phosphate. The polypeptide is Methylglyoxal synthase (Natranaerobius thermophilus (strain ATCC BAA-1301 / DSM 18059 / JW/NM-WN-LF)).